The primary structure comprises 209 residues: A-type ATP synthase subunit D (209 aa).

This sequence belongs to the V-ATPase D subunit family. As to quaternary structure, has multiple subunits with at least A(3), B(3), C, D, E, F, H, I and proteolipid K(x).

It localises to the cell membrane. Its function is as follows. Component of the A-type ATP synthase that produces ATP from ADP in the presence of a proton gradient across the membrane. This Archaeoglobus fulgidus (strain ATCC 49558 / DSM 4304 / JCM 9628 / NBRC 100126 / VC-16) protein is A-type ATP synthase subunit D.